A 349-amino-acid polypeptide reads, in one-letter code: Achromobactin transport system permease protein CbrC (349 aa).

10 helical membrane passes run 32-52 (LALL…KLML), 82-102 (VLAA…QAMI), 111-131 (ILGI…FLAA), 138-158 (LPLA…WLAW), 168-188 (VLTG…MLVF), 190-210 (PLTT…GASW), 216-236 (LGGW…QVRV), 263-283 (VALA…GLIA), 290-310 (LVAP…AGLV), and 325-345 (DLPA…YLLI).

The protein belongs to the binding-protein-dependent transport system permease family. FecCD subfamily.

It localises to the cell inner membrane. Part of the binding-protein-dependent transport system CbrABCD for uptake of the siderophore achromobactin. Probably responsible for the translocation of the substrate across the membrane. In Dickeya dadantii (strain 3937) (Erwinia chrysanthemi (strain 3937)), this protein is Achromobactin transport system permease protein CbrC (cbrC).